Here is a 525-residue protein sequence, read N- to C-terminus: Light-independent protochlorophyllide reductase subunit B (525 aa).

A [4Fe-4S] cluster-binding site is contributed by Asp36. The active-site Proton donor is Asp274. 409 to 410 (GL) is a binding site for substrate. Positions 433–464 (HGGKAVAREESPVAPADLAPAATSDTPAAPSP) are disordered. Residues 444–464 (PVAPADLAPAATSDTPAAPSP) are compositionally biased toward low complexity.

Belongs to the ChlB/BchB/BchZ family. Protochlorophyllide reductase is composed of three subunits; BchL, BchN and BchB. Forms a heterotetramer of two BchB and two BchN subunits. [4Fe-4S] cluster serves as cofactor.

It carries out the reaction chlorophyllide a + oxidized 2[4Fe-4S]-[ferredoxin] + 2 ADP + 2 phosphate = protochlorophyllide a + reduced 2[4Fe-4S]-[ferredoxin] + 2 ATP + 2 H2O. The protein operates within porphyrin-containing compound metabolism; bacteriochlorophyll biosynthesis (light-independent). Its function is as follows. Component of the dark-operative protochlorophyllide reductase (DPOR) that uses Mg-ATP and reduced ferredoxin to reduce ring D of protochlorophyllide (Pchlide) to form chlorophyllide a (Chlide). This reaction is light-independent. The NB-protein (BchN-BchB) is the catalytic component of the complex. The chain is Light-independent protochlorophyllide reductase subunit B from Rhodobacter capsulatus (strain ATCC BAA-309 / NBRC 16581 / SB1003).